A 1694-amino-acid polypeptide reads, in one-letter code: Homeobox-DDT domain protein RLT2 (1694 aa).

The segment at 1-24 (MEGGSEKTTPEGCGGESKSKRKMK) is disordered. A DNA-binding region (homeobox) is located at residues 17–76 (SKSKRKMKTAAQLEVLENTYSAEPYPSEAIRADLSVKLNLSDRQLQMWFCHRRLKERKST). One can recognise a DDT domain in the interval 514-573 (DENVANLLMVWRFLITFADVLGLWPFTLDEFAQAFHDYDPRLMGEIHIVLLKTIIKDIEG). Residues 696–765 (GTVKFAAFHV…APSTYCVRAS (70 aa)) enclose the HTH HARE-type domain. A compositionally biased stretch (acidic residues) spans 795-816 (EDVDDAERDEDSESDVGEDPEV). 4 disordered regions span residues 795-822 (EDVDDAERDEDSESDVGEDPEVDVNLKK), 1450-1541 (KQEE…ICNE), 1555-1639 (AKTS…MNMK), and 1655-1674 (EDSYGRKQHGISISNDAATR). Phosphoserine is present on residues S806 and S808. Positions 1459-1470 (GLGGVSSSGRGG) are enriched in gly residues. Basic residues-rich tracts occupy residues 1471–1485 (RPPRGRGRPRARGNG) and 1515–1531 (GGRKNGRRSGTKGRKRP). 3 stretches are compositionally biased toward acidic residues: residues 1561–1578 (DNDDDWIETPELQDDDGE), 1589–1605 (EDYDDDDVMAPIDDFDG), and 1624–1635 (DEYEEEEEEEED).

Interacts with CHR11. Interacts (via the DDT domain) with CHR11 (via C-terminus). Highly expressed in growing tissues such as inflorescence and flower meristems, young leaves and floral organs. Expressed in roots, rosette and cauline leaves, stems, flowers, inflorescences and siliques.

Its subcellular location is the nucleus. Its function is as follows. Transcriptional regulator required for the maintenance of the plant vegetative phase. In association with CHR11 or CHR17 may prevent the early activation of the vegetative-to-reproductive transition by regulating key genes that contribute to flower timing, such as FT, SEP1, SEP3, AGL8/FUL, SOC1 and FLC. Involved in the transcriptional regulation of seed-specific gene expression. The sequence is that of Homeobox-DDT domain protein RLT2 from Arabidopsis thaliana (Mouse-ear cress).